Here is a 165-residue protein sequence, read N- to C-terminus: Nucleotide-binding protein Tfu_2672 (165 aa).

It belongs to the YajQ family.

Its function is as follows. Nucleotide-binding protein. This is Nucleotide-binding protein Tfu_2672 from Thermobifida fusca (strain YX).